Reading from the N-terminus, the 136-residue chain is Translation initiation factor 5A (136 aa).

Residue K37 is modified to Hypusine.

The protein belongs to the eIF-5A family.

It is found in the cytoplasm. In terms of biological role, functions by promoting the formation of the first peptide bond. The sequence is that of Translation initiation factor 5A from Thermococcus kodakarensis (strain ATCC BAA-918 / JCM 12380 / KOD1) (Pyrococcus kodakaraensis (strain KOD1)).